The following is an 82-amino-acid chain: Diphthamide biosynthesis protein 3 (82 aa).

The 57-residue stretch at 8–64 (IYDEVEIEDMTYDPALQTYSYPCPCGDKFEIALADLQDGQDIAVCPSCSLMVRVIFE) folds into the DPH-type MB domain. Cys30, Cys32, Cys52, and Cys55 together coordinate Fe cation.

This sequence belongs to the DPH3 family. Component of the 2-(3-amino-3-carboxypropyl)histidine synthase complex composed of dph-1, dph-2, dph-3 and a NADH-dependent reductase, predominantly cbr-1. The cofactor is Fe(2+).

It localises to the cytoplasm. The protein resides in the nucleus. The catalysed reaction is [3Fe-4S](1+)-[protein] + Fe(2+)-[Dph3] = [3Fe-4S](0)-[protein] + Fe(3+)-[Dph3]. The enzyme catalyses 2 [3Fe-4S](0)-[protein] + 2 Fe(2+)-[Dph3] + NADH = 2 [4Fe-4S](1+)-[protein] + 2 [Dph3] + NAD(+) + H(+). It functions in the pathway protein modification; peptidyl-diphthamide biosynthesis. Its function is as follows. Required for the first step of diphthamide biosynthesis, a post-translational modification of histidine which occurs in elongation factor 2. Dph-1 and dph-2 transfer a 3-amino-3-carboxypropyl (ACP) group from S-adenosyl-L-methionine (SAM) to a histidine residue, the reaction is assisted by a reduction system comprising dph-3 and a NADH-dependent reductase, predominantly cbr-1. Acts as an electron donor to reduce the Fe-S cluster in dph1-dph2 keeping the [4Fe-4S] clusters in the active and reduced state. Restores iron to dph-1-dph-2 iron-sulfur clusters which have degraded from [4Fe-4S] to [3Fe-4S] by donating an iron atom to reform [4Fe-4S] clusters, in a manner dependent on the presence of elongation factor 2 and SAM. Associates with the elongator complex and is required for tRNA Wobble base modifications mediated by the elongator complex. The elongator complex is required for multiple tRNA modifications, including mcm5U (5-methoxycarbonylmethyl uridine), mcm5s 2U (5-methoxycarbonylmethyl-2-thiouridine), and ncm5U (5-carbamoylmethyl uridine). The sequence is that of Diphthamide biosynthesis protein 3 (dph-3) from Neurospora crassa (strain ATCC 24698 / 74-OR23-1A / CBS 708.71 / DSM 1257 / FGSC 987).